The primary structure comprises 916 residues: Extracellular signal-regulated kinase 7 (916 aa).

The Protein kinase domain occupies 25 to 319 (FDVRKRMGKG…AKEAIRHPYV (295 aa)). ATP-binding positions include 31–39 (MGKGAYGIV) and Lys-54. Asp-149 serves as the catalytic Proton acceptor. Composition is skewed to polar residues over residues 364–376 (CSNR…TPSS) and 390–403 (QART…TTSP). Disordered stretches follow at residues 364–419 (CSNR…TQSR), 452–477 (PPAA…KSVP), 588–608 (PSET…QMKR), 711–742 (KKLQ…SQNY), 792–813 (ELNP…PGRD), and 883–916 (CRHR…PESN). Basic and acidic residues-rich tracts occupy residues 590–608 (ETEH…QMKR), 715–730 (RSKE…RRAL), and 800–811 (GGRDSGSEHSPG). The span at 883 to 892 (CRHRHHKPNH) shows a compositional bias: basic residues. Residues 894–903 (APYDHMRPTE) show a composition bias toward basic and acidic residues.

Belongs to the protein kinase superfamily. Ser/Thr protein kinase family.

The enzyme catalyses L-seryl-[protein] + ATP = O-phospho-L-seryl-[protein] + ADP + H(+). It catalyses the reaction L-threonyl-[protein] + ATP = O-phospho-L-threonyl-[protein] + ADP + H(+). Its function is as follows. Atypical MAPK protein that regulates protein secretion in a kinase activity-dependent manner. In response to starvation regulates protein secretion by mediating transitional endoplasmic reticulum site disassembly. Mediates inhibition of insulin-like peptide secretion upon disturbed ribosome biogenesis and acts as a downstream effector of TP53. The chain is Extracellular signal-regulated kinase 7 from Drosophila melanogaster (Fruit fly).